Reading from the N-terminus, the 326-residue chain is RNA/RNP complex-1-interacting phosphatase (326 aa).

Residues Met-1–Gln-28 are disordered. Residues Phe-59 to Gln-206 form the Tyrosine-protein phosphatase domain. Cys-150 (phosphocysteine intermediate) is an active-site residue. Thr-151–Arg-156 serves as a coordination point for substrate. Arg-156 (proton donor/acceptor) is an active-site residue. The disordered stretch occupies residues Arg-200 to Ala-258. Positions Glu-247 to Ala-258 are enriched in polar residues.

This sequence belongs to the protein-tyrosine phosphatase family. Non-receptor class dual specificity subfamily. In terms of assembly, monomer. May interact with SFRS7 and SFRS9/SRP30C.

It is found in the nucleus. The protein localises to the nucleus speckle. Its function is as follows. Possesses RNA 5'-triphosphatase and diphosphatase activities, but displays a poor protein-tyrosine phosphatase activity. In addition, has phosphatase activity with ATP, ADP and O-methylfluorescein phosphate (in vitro). Binds to RNA. May participate in nuclear mRNA metabolism. The protein is RNA/RNP complex-1-interacting phosphatase (Dusp11) of Rattus norvegicus (Rat).